We begin with the raw amino-acid sequence, 277 residues long: F420-dependent methylenetetrahydromethanopterin dehydrogenase (277 aa).

This sequence belongs to the MTD family.

It catalyses the reaction 5,10-methylenetetrahydromethanopterin + oxidized coenzyme F420-(gamma-L-Glu)(n) + 2 H(+) = 5,10-methenyl-5,6,7,8-tetrahydromethanopterin + reduced coenzyme F420-(gamma-L-Glu)(n). The protein operates within one-carbon metabolism; methanogenesis from CO(2); 5,10-methylene-5,6,7,8-tetrahydromethanopterin from 5,10-methenyl-5,6,7,8-tetrahydromethanopterin (coenzyme F420 route): step 1/1. Functionally, catalyzes the reversible reduction of methenyl-H(4)MPT(+) to methylene-H(4)MPT. The chain is F420-dependent methylenetetrahydromethanopterin dehydrogenase from Methanococcus maripaludis (strain C5 / ATCC BAA-1333).